A 1286-amino-acid chain; its full sequence is MRPSPPPAAPAAEPVPPWLRSLPVAPEFRPTAAEFADPVSYILKIEPAAAPYGICKVVPPLPPPPKKATFSNLSRSFAALHPDDRSPSFPTRHQQVGLCPRRTRPGLKPVWRSSHRYTLPQFESKAGATRKSLLAGLNFPASRQLTPLDHEVLFWRASADRPIVVEYGSDMSGSGFSPCAAQPQPPPQQQPTARAAAHLGETAWNMRGVARSPGSLLRFMPEDVPGVTTPMLYVGMMFSWFAWHVEDHDLHSLNYMHLGAAKTWYGVPRDAALAFEDVVREHGYGGEVNPLETFATLGQKTTVMSPEVLVESGIPCCRLVQNAGEFVVTFPGSYHCGFSHGFNCGEASNIATPEWLRIAKEAAIRRASINRPPMVSHYQLLYDLALSMRFREPSNGEMETRSSRIKEKKKCEGEQLVKKMFIQNVIEDNELLSHLLNDGSSCIILPANAHDGPGLSTLRSTDQSNMNSRISHNLCSREEAPEASGCLSPNRNGDTRNCISSDTHNMEGDKGDIMSATGLLDQGLLSCVTCGILSFSCVAVLKPRDSTARYLMSADSNSINNQLSISGGSILADAPTNERNGVISRPYSEHCCNEIMADDAEIDKNSALDLLAFAHGGQPDPEEDPLEKILKIAHGINKSQPNSSNNVGCVGTKLSSSSTERQERPSSQNAHCNGSSVISNGPKGVRTRNKYQLKMVLSEGFQAKDIYSAKEKKVQSEPSSSKGDVKETIDVSGTENDVGCKSTTISVSEHRGSTKNMYSVKEKKVQSKPSSLKGTVKETVDVSGTENDARCKSITISVSEHRGSTPMTNSLAASIVKPDKDSSRMHVFCLEHAIEVEKQLHAIGGSNIMLICRPEYPKIEAEARLLGEEMGLVYDWKGIHFKEANMEDRQKIQEVLRDEEAIPTSSDWAVKLGINLYYSANLAKSPLYNKQMPYNRVIYRAFGCDSPNDSPVMFNTCERKQSHQKKIVVAGRWCGKVWMSKQVHPYLAHRVESQEAEEADRICSYHFDEKHKAEPVGNSSRVEASKRKSSSLTDVTESSNRRGEIPGEETNTKRPKHSQENNLRALETAAEVVVPSPAGTGLRVSSRIANRANKLKSKMEKEDVPSSRPKSNIKEKSSHASGQKSNVQEANANSASHLRAMPPKQKAEAEAKKQIRTPKPPKQAVEYSCDIEGCSMSFRTKRDLSLHKSDICPVKGCGKKFFSHKYLLQHRKVHTDDRPLTCPWKGCNMAFKWPWARTEHLRVHTGDRPYVCHEPGCAQTFRFVSDFSRHKRKTGHSVKKKKKAKS.

Positions 25-66 (APEFRPTAAEFADPVSYILKIEPAAAPYGICKVVPPLPPPPK) constitute a JmjN domain. The tract at residues 82-105 (PDDRSPSFPTRHQQVGLCPRRTRP) is disordered. The JmjC domain occupies 201 to 367 (ETAWNMRGVA…IAKEAAIRRA (167 aa)). Fe cation-binding residues include histidine 244, glutamate 246, and histidine 335. A compositionally biased stretch (polar residues) spans 641-679 (PNSSNNVGCVGTKLSSSSTERQERPSSQNAHCNGSSVIS). Disordered regions lie at residues 641–686 (PNSS…KGVR), 1013–1060 (AEPV…HSQE), and 1077–1164 (PAGT…PKQA). The segment covering 1119-1136 (HASGQKSNVQEANANSAS) has biased composition (polar residues). The C2H2-type 1; degenerate zinc finger occupies 1167 to 1189 (YSCDIEGCSMSFRTKRDLSLHKS). C2H2-type zinc fingers lie at residues 1190–1214 (DICP…RKVH), 1220–1244 (LTCP…LRVH), and 1250–1276 (YVCH…KTGH).

Requires Fe(2+) as cofactor. In terms of tissue distribution, expressed in leaves and flag leaves. Expressed at low levels in roots, shoots, stems and panicles.

It is found in the nucleus. The catalysed reaction is N(6),N(6),N(6)-trimethyl-L-lysyl(27)-[histone H3] + 2 2-oxoglutarate + 2 O2 = N(6)-methyl-L-lysyl(27)-[histone H3] + 2 formaldehyde + 2 succinate + 2 CO2. In terms of biological role, histone demethylase that demethylates 'Lys-27' (H3K27me) of histone H3 with a specific activity for H3K27me3 and H3K27me2. No activity on H3K4me3, H3K9me3, H3K27me1 and H3K36me3. Involved in biotic stress response. May demethylate H3K27me3-marked defense-related genes and increase their basal and induced expression levels during pathogen infection. The protein is Lysine-specific demethylase JMJ705 (JMJ705) of Oryza sativa subsp. japonica (Rice).